The chain runs to 73 residues: Translation initiation factor IF-1 3 (73 aa).

Residues 1 to 72 form the S1-like domain; sequence MAKEELVEFG…TKGRINYRHK (72 aa).

This sequence belongs to the IF-1 family. In terms of assembly, component of the 30S ribosomal translation pre-initiation complex which assembles on the 30S ribosome in the order IF-2 and IF-3, IF-1 and N-formylmethionyl-tRNA(fMet); mRNA recruitment can occur at any time during PIC assembly.

Its subcellular location is the cytoplasm. Its function is as follows. One of the essential components for the initiation of protein synthesis. Stabilizes the binding of IF-2 and IF-3 on the 30S subunit to which N-formylmethionyl-tRNA(fMet) subsequently binds. Helps modulate mRNA selection, yielding the 30S pre-initiation complex (PIC). Upon addition of the 50S ribosomal subunit IF-1, IF-2 and IF-3 are released leaving the mature 70S translation initiation complex. This Cupriavidus metallidurans (strain ATCC 43123 / DSM 2839 / NBRC 102507 / CH34) (Ralstonia metallidurans) protein is Translation initiation factor IF-1 3.